Reading from the N-terminus, the 1031-residue chain is Error-prone DNA polymerase (1031 aa).

This sequence belongs to the DNA polymerase type-C family. DnaE2 subfamily.

The protein localises to the cytoplasm. The enzyme catalyses DNA(n) + a 2'-deoxyribonucleoside 5'-triphosphate = DNA(n+1) + diphosphate. Functionally, DNA polymerase involved in damage-induced mutagenesis and translesion synthesis (TLS). It is not the major replicative DNA polymerase. This chain is Error-prone DNA polymerase, found in Pseudomonas savastanoi pv. phaseolicola (strain 1448A / Race 6) (Pseudomonas syringae pv. phaseolicola (strain 1448A / Race 6)).